We begin with the raw amino-acid sequence, 199 residues long: Translation initiation factor IF-3 (199 aa).

Belongs to the IF-3 family. Monomer.

It is found in the cytoplasm. IF-3 binds to the 30S ribosomal subunit and shifts the equilibrium between 70S ribosomes and their 50S and 30S subunits in favor of the free subunits, thus enhancing the availability of 30S subunits on which protein synthesis initiation begins. The protein is Translation initiation factor IF-3 of Mycoplasmopsis pulmonis (strain UAB CTIP) (Mycoplasma pulmonis).